Consider the following 274-residue polypeptide: Karrikin insensitive 2 receptor IA (274 aa).

Ser-95 (nucleophile) is an active-site residue. Residues Asp-217 and His-246 contribute to the active site.

It belongs to the AB hydrolase superfamily. Interacts with MAX2A and MAX2B in the presence of (-)-germacrene D, thus forming an E3 SCF ubiquitin ligase complex (ASK-cullin-F-box) containing MAX2A or MAX2B and KAI2IA recognizing SMAX1A; this leads to the subsequent degradation of the transcriptional corepressor SMAX1A, thus triggering the activation of a downstream signaling cascade. Strongly expressed in stigma.

The protein resides in the nucleus. Its subcellular location is the cytoplasm. With respect to regulation, hydrolysis activity toward yoshimulactone green (YLG), a fluorescent agonist to strigolactone receptor, is inhibited by (-)-germacrene D and GR24, a synthetic strigolactone analog. In terms of biological role, hydrolase involved in the olfaction of sesquiterpene volatile organic compounds (VOCs) during volatile plant communication in a MAX2 proteins-dependent manner. Acts as a karrikin-insensitive receptor that stereospecifically perceives and binds to (-)-germacrene D, particularly in stigmas, and triggers a signaling cascade influencing plant fitness, as the result of reproductive organ growth-promoting effect; this process involves an interaction with MAX2 proteins (e.g. MAX2A and MAX2B) and the subsequent degradation of SMAX1a, a transcriptional corepressor. The polypeptide is Karrikin insensitive 2 receptor IA (Petunia hybrida (Petunia)).